A 361-amino-acid polypeptide reads, in one-letter code: Nicotinate-nucleotide--dimethylbenzimidazole phosphoribosyltransferase (361 aa).

The Proton acceptor role is filled by Glu314.

The protein belongs to the CobT family.

It catalyses the reaction 5,6-dimethylbenzimidazole + nicotinate beta-D-ribonucleotide = alpha-ribazole 5'-phosphate + nicotinate + H(+). Its pathway is nucleoside biosynthesis; alpha-ribazole biosynthesis; alpha-ribazole from 5,6-dimethylbenzimidazole: step 1/2. In terms of biological role, catalyzes the synthesis of alpha-ribazole-5'-phosphate from nicotinate mononucleotide (NAMN) and 5,6-dimethylbenzimidazole (DMB). This is Nicotinate-nucleotide--dimethylbenzimidazole phosphoribosyltransferase from Mycobacterium bovis (strain BCG / Pasteur 1173P2).